The chain runs to 246 residues: 4-hydroxy-tetrahydrodipicolinate reductase (246 aa).

Residues 8 to 13 (GAKGRM), 74 to 76 (GTT), and 101 to 104 (APNF) contribute to the NAD(+) site. His131 functions as the Proton donor/acceptor in the catalytic mechanism. His132 lines the (S)-2,3,4,5-tetrahydrodipicolinate pocket. Residue Lys135 is the Proton donor of the active site. 141–142 (GT) contacts (S)-2,3,4,5-tetrahydrodipicolinate.

This sequence belongs to the DapB family.

The protein resides in the cytoplasm. The catalysed reaction is (S)-2,3,4,5-tetrahydrodipicolinate + NAD(+) + H2O = (2S,4S)-4-hydroxy-2,3,4,5-tetrahydrodipicolinate + NADH + H(+). It catalyses the reaction (S)-2,3,4,5-tetrahydrodipicolinate + NADP(+) + H2O = (2S,4S)-4-hydroxy-2,3,4,5-tetrahydrodipicolinate + NADPH + H(+). It participates in amino-acid biosynthesis; L-lysine biosynthesis via DAP pathway; (S)-tetrahydrodipicolinate from L-aspartate: step 4/4. Functionally, catalyzes the conversion of 4-hydroxy-tetrahydrodipicolinate (HTPA) to tetrahydrodipicolinate. The sequence is that of 4-hydroxy-tetrahydrodipicolinate reductase from Cutibacterium acnes (strain DSM 16379 / KPA171202) (Propionibacterium acnes).